The sequence spans 873 residues: Valine--tRNA ligase (873 aa).

The short motif at 43–53 (PNVTGVLHMGH) is the 'HIGH' region element. Residues 532–536 (KMSKS) carry the 'KMSKS' region motif. K535 is an ATP binding site. A coiled-coil region spans residues 802 to 873 (LGNLINVEEE…IEESIAALTK (72 aa)).

This sequence belongs to the class-I aminoacyl-tRNA synthetase family. ValS type 1 subfamily. As to quaternary structure, monomer.

It is found in the cytoplasm. It carries out the reaction tRNA(Val) + L-valine + ATP = L-valyl-tRNA(Val) + AMP + diphosphate. In terms of biological role, catalyzes the attachment of valine to tRNA(Val). As ValRS can inadvertently accommodate and process structurally similar amino acids such as threonine, to avoid such errors, it has a 'posttransfer' editing activity that hydrolyzes mischarged Thr-tRNA(Val) in a tRNA-dependent manner. This Parabacteroides distasonis (strain ATCC 8503 / DSM 20701 / CIP 104284 / JCM 5825 / NCTC 11152) protein is Valine--tRNA ligase.